A 63-amino-acid polypeptide reads, in one-letter code: Conotoxin PnMRCL-0111 (63 aa).

The N-terminal stretch at 1-19 (MRCLPVFIVLLLLIVSAPG) is a signal peptide. The propeptide occupies 20 to 49 (FDARPKTEDDVPLSSFHDDLQRTVRTLLDI). Tryptophan amide is present on Trp62.

The protein belongs to the conotoxin T superfamily. In terms of processing, contains 2 disulfide bonds that can be either 'C1-C3, C2-C4' or 'C1-C4, C2-C3', since these disulfide connectivities have been observed for conotoxins with cysteine framework V (for examples, see AC P0DQQ7 and AC P81755). As to expression, expressed by the venom duct.

The protein localises to the secreted. This is Conotoxin PnMRCL-0111 from Conus pennaceus (Feathered cone).